Here is a 264-residue protein sequence, read N- to C-terminus: Gap junction beta-1 protein (264 aa).

At 1-22 (MNWAGLYAILSGVNRHSTSIGR) the chain is on the cytoplasmic side. A helical transmembrane segment spans residues 23-45 (IWLSVVFIFRIMVLVAAAESVWG). Residues 46-75 (DEKSAFTCNTQQPGCNSVCYDHFFPISHIR) lie on the Extracellular side of the membrane. Residues 76-98 (LWALQLIIVSTPALLVAMHVAHL) form a helical membrane-spanning segment. At 99–130 (QHQEKKELRLSRHVKDQELAEVKKHKVKISGT) the chain is on the cytoplasmic side. Residues 131-153 (LWWTYISSVFFRIIFEAAFMYIF) form a helical membrane-spanning segment. Residues 154-191 (YLIYPGYSMIRLLKCDAYPCPNTVDCFVSRPTEKTIFT) are Extracellular-facing. The chain crosses the membrane as a helical span at residues 192 to 214 (VFMLVASGVCIVLNVAEVFFLIA). Residues 215–264 (QACTRRARRHRDSGSISKEHQQNEMNLLITGGSIIKRSAGQEKGDHCSTS) lie on the Cytoplasmic side of the membrane.

This sequence belongs to the connexin family. Beta-type (group I) subfamily. In terms of assembly, a connexon is composed of a hexamer of connexins. As to expression, lung, liver, intestines, stomach and kidney.

It localises to the cell membrane. Its subcellular location is the cell junction. The protein resides in the gap junction. Its function is as follows. One gap junction consists of a cluster of closely packed pairs of transmembrane channels, the connexons, through which materials of low MW diffuse from one cell to a neighboring cell. The sequence is that of Gap junction beta-1 protein (gjb1) from Xenopus laevis (African clawed frog).